Here is a 319-residue protein sequence, read N- to C-terminus: ATP-dependent 6-phosphofructokinase (319 aa).

Residue G11 coordinates ATP. Residue 21 to 25 (RAVTR) participates in ADP binding. ATP-binding positions include 72 to 73 (RF) and 102 to 105 (GDGS). D103 provides a ligand contact to Mg(2+). 125–127 (SID) is a substrate binding site. The active-site Proton acceptor is D127. Residue R154 participates in ADP binding. Substrate contacts are provided by residues R162 and 169–171 (MGR). ADP is bound by residues 185-187 (GAD) and 213-215 (KKH). Residues E222, R243, and 249–252 (HMQR) each bind substrate.

The protein belongs to the phosphofructokinase type A (PFKA) family. ATP-dependent PFK group I subfamily. Prokaryotic clade 'B1' sub-subfamily. As to quaternary structure, homotetramer. It depends on Mg(2+) as a cofactor.

It localises to the cytoplasm. It catalyses the reaction beta-D-fructose 6-phosphate + ATP = beta-D-fructose 1,6-bisphosphate + ADP + H(+). The protein operates within carbohydrate degradation; glycolysis; D-glyceraldehyde 3-phosphate and glycerone phosphate from D-glucose: step 3/4. Allosterically activated by ADP and other diphosphonucleosides, and allosterically inhibited by phosphoenolpyruvate. Its function is as follows. Catalyzes the phosphorylation of D-fructose 6-phosphate to fructose 1,6-bisphosphate by ATP, the first committing step of glycolysis. The protein is ATP-dependent 6-phosphofructokinase of Lactobacillus gasseri (strain ATCC 33323 / DSM 20243 / BCRC 14619 / CIP 102991 / JCM 1131 / KCTC 3163 / NCIMB 11718 / NCTC 13722 / AM63).